We begin with the raw amino-acid sequence, 270 residues long: MITLSTLKKYKKEGRKFSCLTCYDAMFAKMMQNAQVDTILIGDSLGMVVQGNDSTLPVTVEDIVYHTGNVSRSNKHALILADLPFMSYVTVEDAIANTRKVMQAGAQVIKLEGGAELSEMVTTLTKAGAPICVHLGLTPQSVNVFGGYKVQGKSDDAAAKLMSDVHAVVAAGASLILLECVPASLAKAVTEAVDVPVIGIGAGADTDGQVLVMHDMLGVTHGRTARFVHDFLTDERNQKSEYAGSVEGAFALFHNSVIEGSYPQAEHQFN.

Aspartate 43 and aspartate 82 together coordinate Mg(2+). 3-methyl-2-oxobutanoate is bound by residues aspartate 43–serine 44, aspartate 82, and lysine 110. Residue glutamate 112 participates in Mg(2+) binding. Glutamate 179 functions as the Proton acceptor in the catalytic mechanism.

Belongs to the PanB family. Homodecamer; pentamer of dimers. Mg(2+) serves as cofactor.

It is found in the cytoplasm. The enzyme catalyses 3-methyl-2-oxobutanoate + (6R)-5,10-methylene-5,6,7,8-tetrahydrofolate + H2O = 2-dehydropantoate + (6S)-5,6,7,8-tetrahydrofolate. Its pathway is cofactor biosynthesis; (R)-pantothenate biosynthesis; (R)-pantoate from 3-methyl-2-oxobutanoate: step 1/2. Functionally, catalyzes the reversible reaction in which hydroxymethyl group from 5,10-methylenetetrahydrofolate is transferred onto alpha-ketoisovalerate to form ketopantoate. The polypeptide is 3-methyl-2-oxobutanoate hydroxymethyltransferase (Psychrobacter sp. (strain PRwf-1)).